The following is a 1018-amino-acid chain: DNA polymerase gamma (1018 aa).

The protein belongs to the DNA polymerase type-A family. It depends on Mg(2+) as a cofactor.

It localises to the mitochondrion. It carries out the reaction DNA(n) + a 2'-deoxyribonucleoside 5'-triphosphate = DNA(n+1) + diphosphate. Its function is as follows. Involved in the replication of mitochondrial DNA. This Schizosaccharomyces pombe (strain 972 / ATCC 24843) (Fission yeast) protein is DNA polymerase gamma (mip1).